Reading from the N-terminus, the 365-residue chain is Putative chalcone synthase (365 aa).

Residue Cys-144 is part of the active site.

The protein belongs to the thiolase-like superfamily. Chalcone/stilbene synthases family.

It carries out the reaction (E)-4-coumaroyl-CoA + 3 malonyl-CoA + 3 H(+) = 2',4,4',6'-tetrahydroxychalcone + 3 CO2 + 4 CoA. The sequence is that of Putative chalcone synthase (bcsA) from Bacillus subtilis (strain 168).